A 102-amino-acid chain; its full sequence is Large ribosomal subunit protein uL24 (102 aa).

The protein belongs to the universal ribosomal protein uL24 family. As to quaternary structure, part of the 50S ribosomal subunit.

One of two assembly initiator proteins, it binds directly to the 5'-end of the 23S rRNA, where it nucleates assembly of the 50S subunit. Its function is as follows. One of the proteins that surrounds the polypeptide exit tunnel on the outside of the subunit. In Finegoldia magna (strain ATCC 29328 / DSM 20472 / WAL 2508) (Peptostreptococcus magnus), this protein is Large ribosomal subunit protein uL24.